A 408-amino-acid chain; its full sequence is Peptidase T (408 aa).

H78 lines the Zn(2+) pocket. The active site involves D80. D141 contacts Zn(2+). E175 functions as the Proton acceptor in the catalytic mechanism. Zn(2+) is bound by residues E176, D198, and H380.

The protein belongs to the peptidase M20B family. It depends on Zn(2+) as a cofactor.

Its subcellular location is the cytoplasm. The enzyme catalyses Release of the N-terminal residue from a tripeptide.. Functionally, cleaves the N-terminal amino acid of tripeptides. This chain is Peptidase T, found in Clostridium botulinum (strain Langeland / NCTC 10281 / Type F).